Consider the following 440-residue polypeptide: Thymidine phosphorylase (440 aa).

This sequence belongs to the thymidine/pyrimidine-nucleoside phosphorylase family. As to quaternary structure, homodimer.

It catalyses the reaction thymidine + phosphate = 2-deoxy-alpha-D-ribose 1-phosphate + thymine. Its pathway is pyrimidine metabolism; dTMP biosynthesis via salvage pathway; dTMP from thymine: step 1/2. Its function is as follows. The enzymes which catalyze the reversible phosphorolysis of pyrimidine nucleosides are involved in the degradation of these compounds and in their utilization as carbon and energy sources, or in the rescue of pyrimidine bases for nucleotide synthesis. The sequence is that of Thymidine phosphorylase from Shigella flexneri serotype 5b (strain 8401).